A 308-amino-acid polypeptide reads, in one-letter code: uncharacterized protein (308 aa).

This is an uncharacterized protein from Ictalurid herpesvirus 1 (strain Auburn) (IcHV-1).